A 49-amino-acid chain; its full sequence is DEIGDAAKKLGDASYAFAKEVDCNNGIFLQAPGKFQPLEALKXIXKHXV.

In terms of assembly, monomer. In terms of processing, binds 12 peridinin and 2 chlorophyll a molecules per monomer.

The protein resides in the plastid. Its subcellular location is the chloroplast. Its function is as follows. Water-soluble antenna for capture of solar energy in the blue-green range. Peridinin is an asymmetric carotenoid. The sequence is that of Peridinin-chlorophyll a-binding protein from Alexandrium cohorticula (Dinoflagellate).